The sequence spans 211 residues: Ribosomal RNA large subunit methyltransferase E (211 aa).

Positions 60, 62, 85, 101, and 126 each coordinate S-adenosyl-L-methionine. The active-site Proton acceptor is Lys-166.

Belongs to the class I-like SAM-binding methyltransferase superfamily. RNA methyltransferase RlmE family.

The protein resides in the cytoplasm. The enzyme catalyses uridine(2552) in 23S rRNA + S-adenosyl-L-methionine = 2'-O-methyluridine(2552) in 23S rRNA + S-adenosyl-L-homocysteine + H(+). In terms of biological role, specifically methylates the uridine in position 2552 of 23S rRNA at the 2'-O position of the ribose in the fully assembled 50S ribosomal subunit. This chain is Ribosomal RNA large subunit methyltransferase E, found in Bordetella petrii (strain ATCC BAA-461 / DSM 12804 / CCUG 43448).